A 158-amino-acid polypeptide reads, in one-letter code: Vasotocin-neurophysin VT 2 (158 aa).

A signal peptide spans 1–19; sequence MPHSTLLLCVIGLLAFSSA. Cysteines 20 and 25 form a disulfide. G28 bears the Glycine amide mark. Cystine bridges form between C41/C85, C44/C58, C52/C75, C59/C65, C92/C105, C99/C117, and C106/C111.

The protein belongs to the vasopressin/oxytocin family. Seven disulfide bonds are present in neurophysin.

It is found in the secreted. Vasotocin is an antidiuretic hormone. The sequence is that of Vasotocin-neurophysin VT 2 from Oncorhynchus keta (Chum salmon).